We begin with the raw amino-acid sequence, 394 residues long: Elongation factor Tu (394 aa).

Residues 10–204 (KPHVNIGTIG…AVDSYIPQPI (195 aa)) form the tr-type G domain. Positions 19-26 (GHVDHGKT) are G1. A GTP-binding site is contributed by 19–26 (GHVDHGKT). Thr26 contacts Mg(2+). Positions 60 to 64 (GITIS) are G2. Positions 81-84 (DCPG) are G3. GTP contacts are provided by residues 81 to 85 (DCPGH) and 136 to 139 (NKVD). Residues 136–139 (NKVD) form a G4 region. Residues 174 to 176 (SAL) are G5.

Belongs to the TRAFAC class translation factor GTPase superfamily. Classic translation factor GTPase family. EF-Tu/EF-1A subfamily. Monomer.

The protein localises to the cytoplasm. It carries out the reaction GTP + H2O = GDP + phosphate + H(+). In terms of biological role, GTP hydrolase that promotes the GTP-dependent binding of aminoacyl-tRNA to the A-site of ribosomes during protein biosynthesis. This is Elongation factor Tu from Rickettsia typhi (strain ATCC VR-144 / Wilmington).